We begin with the raw amino-acid sequence, 332 residues long: Small ribosomal subunit biogenesis GTPase RsgA (332 aa).

The CP-type G domain maps to 103 to 259; that stretch reads RQQLIAANLD…LIDTPGMREL (157 aa). GTP contacts are provided by residues 148–151 and 201–209; these read TKVD and GSSGAGKST. Positions 281, 286, 288, and 294 each coordinate Zn(2+).

It belongs to the TRAFAC class YlqF/YawG GTPase family. RsgA subfamily. As to quaternary structure, monomer. Associates with 30S ribosomal subunit, binds 16S rRNA. Zn(2+) is required as a cofactor.

Its subcellular location is the cytoplasm. One of several proteins that assist in the late maturation steps of the functional core of the 30S ribosomal subunit. Helps release RbfA from mature subunits. May play a role in the assembly of ribosomal proteins into the subunit. Circularly permuted GTPase that catalyzes slow GTP hydrolysis, GTPase activity is stimulated by the 30S ribosomal subunit. The polypeptide is Small ribosomal subunit biogenesis GTPase RsgA (Xylella fastidiosa (strain M12)).